The following is a 459-amino-acid chain: MNRLPSSASALACSAHALNLIEKRTLDHEEMKALNREVIEYFKEHVNPGFLEYRKSVTAGGDYGAVEWQAGGLNTLVDTQGEEFIDCLGGFGIFNVGHRNPVVVSAVQNQLAKQPLHSQELLDPLRAMLAKTLAALTPGKLKYSFFCNSGTESVEAALKLAKAYQSPRGKFTFIATSGAFHGKSLGALSATAKSTFRKPFMPLLPGFRHVPFGNIEAMRTALNECKKTGDDVAAVILEPIQGEGGVILPPPGYLTAVRKLCDEFGALMILDEVQTGMGRTGKMFACEHENVQPDILCLAKALGGGVMPIGATIATEEVFSVLFDNPFLHTTTFGGNPLACAAALATINVLLEQNLPAQAEQKGDMLLDGFRQLAREYPDLVQEARGKGMLMAIEFVDNEIGYNFASEMFRQRVLVAGTLNNAKTIRIEPPLTLTIEQCELVIKAARKALAAMRVSVEEA.

Pyridoxal 5'-phosphate-binding positions include 150–151 (GT) and glutamine 274. Lysine 300 is modified (N6-(pyridoxal phosphate)lysine). Threonine 332 contacts pyridoxal 5'-phosphate.

It belongs to the class-III pyridoxal-phosphate-dependent aminotransferase family. Putrescine aminotransferase subfamily. The cofactor is pyridoxal 5'-phosphate.

The enzyme catalyses an alkane-alpha,omega-diamine + 2-oxoglutarate = an omega-aminoaldehyde + L-glutamate. The catalysed reaction is putrescine + 2-oxoglutarate = 1-pyrroline + L-glutamate + H2O. It catalyses the reaction cadaverine + 2-oxoglutarate = 5-aminopentanal + L-glutamate. It functions in the pathway amine and polyamine degradation; putrescine degradation; 4-aminobutanal from putrescine (transaminase route): step 1/1. Its function is as follows. Catalyzes the aminotransferase reaction from putrescine to 2-oxoglutarate, leading to glutamate and 4-aminobutanal, which spontaneously cyclizes to form 1-pyrroline. This is the first step in one of two pathways for putrescine degradation, where putrescine is converted into 4-aminobutanoate (gamma-aminobutyrate or GABA) via 4-aminobutanal. Also functions as a cadaverine transaminase in a a L-lysine degradation pathway to succinate that proceeds via cadaverine, glutarate and L-2-hydroxyglutarate. This Escherichia coli (strain ATCC 8739 / DSM 1576 / NBRC 3972 / NCIMB 8545 / WDCM 00012 / Crooks) protein is Putrescine aminotransferase.